Here is a 549-residue protein sequence, read N- to C-terminus: Chaperonin GroEL (549 aa).

Residues 29-32 (TLGP), Lys50, 86-90 (DGTTT), Gly414, 477-479 (NAL), and Asp493 contribute to the ATP site.

It belongs to the chaperonin (HSP60) family. Forms a cylinder of 14 subunits composed of two heptameric rings stacked back-to-back. Interacts with the co-chaperonin GroES.

It is found in the cytoplasm. The catalysed reaction is ATP + H2O + a folded polypeptide = ADP + phosphate + an unfolded polypeptide.. In terms of biological role, together with its co-chaperonin GroES, plays an essential role in assisting protein folding. The GroEL-GroES system forms a nano-cage that allows encapsulation of the non-native substrate proteins and provides a physical environment optimized to promote and accelerate protein folding. This Leptospira biflexa serovar Patoc (strain Patoc 1 / Ames) protein is Chaperonin GroEL.